The primary structure comprises 288 residues: MAEYSGLTKTSSALPRLSSKRTYSLMRAEAPSESVPYYSYCLRLRRLVLIFVNPLYFMRYRNWLAQDDTLSELLELINRQLTEKGLKVEKASAAVVDATIIQTAGSKQRQAIEVDEEGQISGQTTPSKDKDARWIKKNGLYKLGYKQHTRTDAEGYTEKLHITPANAHECKHLPPLLEGLPKGTTVYADKGYDSAENRQHLKEHQLQDGIMRKACRNRPLTETQTKRNRYLSKTRYVVEQSFGTLHRKFRYARAAYFGLIKVSAQSHLKAMCLNLLKAANRLSAPASA.

The protein belongs to the transposase 11 family.

Functionally, involved in the transposition of the insertion sequence. In Neisseria meningitidis serogroup B, this protein is Transposase for insertion sequence element IS1106.